We begin with the raw amino-acid sequence, 216 residues long: Cytochrome c-type protein Cgr1 (216 aa).

Residues W18–V38 traverse the membrane as a helical segment. Heme-binding residues include C46, C50, H51, C95, C98, H99, C142, C147, H148, C176, C179, H180, C190, C193, and H194.

This sequence belongs to the multiheme cytochrome c family. As to quaternary structure, may form a membrane-associated complex with Cgr2. Binds 5 heme groups per subunit.

The protein resides in the cell membrane. Its function is as follows. Probably transfers electrons from a membrane-associated electron donor (e.g. the membrane quinone pool) to the [4Fe-4S] cluster of the Cgr2 reductase via its covalently bound heme groups. This Eggerthella lenta (strain ATCC 25559 / DSM 2243 / CCUG 17323 / JCM 9979 / KCTC 3265 / NCTC 11813 / VPI 0255 / 1899 B) (Eubacterium lentum) protein is Cytochrome c-type protein Cgr1.